A 420-amino-acid polypeptide reads, in one-letter code: 5'-deoxyadenosine deaminase (420 aa).

Positions 55 and 57 each coordinate Zn(2+). Positions 84 and 176 each coordinate substrate. Histidine 203 provides a ligand contact to Zn(2+). Residues glutamate 206 and aspartate 292 each coordinate substrate. Residue aspartate 292 participates in Zn(2+) binding.

Belongs to the metallo-dependent hydrolases superfamily. MTA/SAH deaminase family. As to quaternary structure, homotetramer. The cofactor is Zn(2+).

The catalysed reaction is 5'-deoxyadenosine + H2O + H(+) = 5'-deoxyinosine + NH4(+). It carries out the reaction S-adenosyl-L-homocysteine + H2O + H(+) = S-inosyl-L-homocysteine + NH4(+). The enzyme catalyses S-methyl-5'-thioadenosine + H2O + H(+) = S-methyl-5'-thioinosine + NH4(+). It catalyses the reaction adenosine + H2O + H(+) = inosine + NH4(+). The protein operates within amino-acid biosynthesis; S-adenosyl-L-methionine biosynthesis. Catalyzes the deamination of three SAM-derived enzymatic products, namely 5'-deoxyadenosine, S-adenosyl-L-homocysteine, and 5'-methylthioadenosine, to produce the inosine analogs. Can also deaminate adenosine. The preferred substrate for this enzyme is 5'-deoxyadenosine, but all these substrates are efficiently deaminated. Likely functions in a S-adenosyl-L-methionine (SAM) recycling pathway from S-adenosyl-L-homocysteine (SAH) produced from SAM-dependent methylation reactions. May also be involved in the recycling of 5'-deoxyadenosine, whereupon the 5'-deoxyribose moiety of 5'-deoxyinosine is further metabolized to deoxyhexoses used for the biosynthesis of aromatic amino acids in methanogens. The protein is 5'-deoxyadenosine deaminase of Methanocaldococcus jannaschii (strain ATCC 43067 / DSM 2661 / JAL-1 / JCM 10045 / NBRC 100440) (Methanococcus jannaschii).